The following is a 534-amino-acid chain: MFASYKSIQETCAFEKLSELAQSPYDLTQPGALQADNRLQRYQVAGQAFKLFYATEQVDDRVLAGLQAVADECQLVSQYRAMRTGAVMNKIDGFVSENRRVLHTATRDLFSGEPAEASMNSRAKRELEKLSHFLDALDAGEIVNEAGEAFTTIVQVGIGGSDLGPRAVYEALKSYTIVGRRAAFISNVDPDDVSMALADLDLGKTIFNIVSKSGSTLETVTNEAFVRRALLENGYDSARHCISITGEGSPMDDPDSYLASFYLYDCIGGRYSTTSMVGCVLLGFTLGFEQVMAFLRGAANMDNSADEVDILKNIPLLMALIGIWNRNFLDLSSLAIIPYSQALYRFPAHLQQCDMESNGKSVDRQGRAVQGKTGPIIWGETGSNSQHAFFQHIYQGTSPVPIEFIGFSESQRGKDIEVQGCTSQQKLLANLFAQMVALACGKKDQNLNKFFAGNRPSCLLFAKKLTPYVMGSLLACYEAKIVFQGFAWNINSFDQEGVQLGKELAKRFLREIGGEEEGFHGIESAFLNEVQRGV.

The active-site Proton donor is the Glu356. Active-site residues include His387 and Lys502.

The protein belongs to the GPI family.

The protein resides in the cytoplasm. The enzyme catalyses alpha-D-glucose 6-phosphate = beta-D-fructose 6-phosphate. Its pathway is carbohydrate biosynthesis; gluconeogenesis. It participates in carbohydrate degradation; glycolysis; D-glyceraldehyde 3-phosphate and glycerone phosphate from D-glucose: step 2/4. Catalyzes the reversible isomerization of glucose-6-phosphate to fructose-6-phosphate. The protein is Glucose-6-phosphate isomerase of Desulfotalea psychrophila (strain LSv54 / DSM 12343).